A 215-amino-acid chain; its full sequence is 3-isopropylmalate dehydratase small subunit (215 aa).

The protein belongs to the LeuD family. LeuD type 1 subfamily. Heterodimer of LeuC and LeuD.

It catalyses the reaction (2R,3S)-3-isopropylmalate = (2S)-2-isopropylmalate. Its pathway is amino-acid biosynthesis; L-leucine biosynthesis; L-leucine from 3-methyl-2-oxobutanoate: step 2/4. Catalyzes the isomerization between 2-isopropylmalate and 3-isopropylmalate, via the formation of 2-isopropylmaleate. The chain is 3-isopropylmalate dehydratase small subunit from Leptothrix cholodnii (strain ATCC 51168 / LMG 8142 / SP-6) (Leptothrix discophora (strain SP-6)).